A 232-amino-acid chain; its full sequence is 6-phosphogluconolactonase (232 aa).

The protein belongs to the glucosamine/galactosamine-6-phosphate isomerase family. 6-phosphogluconolactonase subfamily.

It catalyses the reaction 6-phospho-D-glucono-1,5-lactone + H2O = 6-phospho-D-gluconate + H(+). It participates in carbohydrate degradation; pentose phosphate pathway; D-ribulose 5-phosphate from D-glucose 6-phosphate (oxidative stage): step 2/3. Hydrolysis of 6-phosphogluconolactone to 6-phosphogluconate. This Rhizobium meliloti (strain 1021) (Ensifer meliloti) protein is 6-phosphogluconolactonase (pgl).